Reading from the N-terminus, the 391-residue chain is Ribosomal RNA small subunit methyltransferase H (391 aa).

The tract at residues 1–23 (MDVDVQDDVQGRAGEGAEERAHD) is disordered. S-adenosyl-L-methionine-binding positions include 59 to 61 (GGH), D78, L112, D126, and Q133. Residues 284 to 391 (SSSSAPPDLP…EPGATVERTP (108 aa)) are disordered. A compositionally biased stretch (basic and acidic residues) spans 368–380 (RTQEFETHPHLEP).

This sequence belongs to the methyltransferase superfamily. RsmH family.

It is found in the cytoplasm. The enzyme catalyses cytidine(1402) in 16S rRNA + S-adenosyl-L-methionine = N(4)-methylcytidine(1402) in 16S rRNA + S-adenosyl-L-homocysteine + H(+). In terms of biological role, specifically methylates the N4 position of cytidine in position 1402 (C1402) of 16S rRNA. The polypeptide is Ribosomal RNA small subunit methyltransferase H (Kineococcus radiotolerans (strain ATCC BAA-149 / DSM 14245 / SRS30216)).